Consider the following 413-residue polypeptide: Multidrug resistance protein MdtA (413 aa).

The first 25 residues, 1–25 (MKNKRRTYFFQFAVLAVVIATAYFA), serve as a signal peptide directing secretion. A disordered region spans residues 394-413 (ANTYDQMDKSKPSNSKVENT).

Belongs to the membrane fusion protein (MFP) (TC 8.A.1) family. Part of a tripartite efflux system composed of MdtA, MdtB and MdtC.

It is found in the cell inner membrane. In Xenorhabdus bovienii (strain SS-2004) (Xenorhabdus nematophila subsp. bovienii), this protein is Multidrug resistance protein MdtA.